Here is a 136-residue protein sequence, read N- to C-terminus: Ig kappa chain V-V region MOPC 21 (136 aa).

Positions 1-29 (MHQTSMGIKMESHTLVFISILLCLYGADG) are cleaved as a signal peptide. The segment at 30-52 (NIVMTQSPKSMSMSVGERVTLTC) is framework-1. A complementarity-determining-1 region spans residues 53 to 63 (KASENVVTYVS). The interval 64-78 (WYQQKPEQSPKLLIY) is framework-2. Residues 79–85 (GASNRYT) are complementarity-determining-2. The interval 86–117 (GVPDRFTGSGSATDFTLTISSVQAEDLADYHC) is framework-3. The interval 118–126 (GQGYSYPYT) is complementarity-determining-3. The tract at residues 127 to 136 (FGGGTKLEIK) is framework-4.

The protein is Ig kappa chain V-V region MOPC 21 of Mus musculus (Mouse).